Here is a 277-residue protein sequence, read N- to C-terminus: Phosphoenolpyruvate synthase regulatory protein (277 aa).

157–164 (GVSRCGKT) serves as a coordination point for ADP.

Belongs to the pyruvate, phosphate/water dikinase regulatory protein family. PSRP subfamily.

The catalysed reaction is [pyruvate, water dikinase] + ADP = [pyruvate, water dikinase]-phosphate + AMP + H(+). It catalyses the reaction [pyruvate, water dikinase]-phosphate + phosphate + H(+) = [pyruvate, water dikinase] + diphosphate. Its function is as follows. Bifunctional serine/threonine kinase and phosphorylase involved in the regulation of the phosphoenolpyruvate synthase (PEPS) by catalyzing its phosphorylation/dephosphorylation. This Escherichia coli O7:K1 (strain IAI39 / ExPEC) protein is Phosphoenolpyruvate synthase regulatory protein.